The sequence spans 132 residues: MSFTDPIGDMLTRIRNASSARHEKVLVPASRLKVRIAEVLREEGFIKDFVLHEDGVQGAITIVLKYSADREPAISDIKRVSKPGLRRYVATDSIPRVLNGMGVAILSTSKGVMVDREARKQKVGGELICTVW.

This sequence belongs to the universal ribosomal protein uS8 family. Part of the 30S ribosomal subunit. Contacts proteins S5 and S12.

Functionally, one of the primary rRNA binding proteins, it binds directly to 16S rRNA central domain where it helps coordinate assembly of the platform of the 30S subunit. In Anaeromyxobacter dehalogenans (strain 2CP-1 / ATCC BAA-258), this protein is Small ribosomal subunit protein uS8.